The following is a 753-amino-acid chain: Pumilio homolog 23 (753 aa).

The disordered stretch occupies residues 1-84 (MVSVGSKSLP…SEFEHQNQFV (84 aa)). 3 stretches are compositionally biased toward basic and acidic residues: residues 23–38 (MGER…ERNK), 47–57 (GNRGFDVDSSK), and 73–84 (KHSEFEHQNQFV). Pumilio repeat units follow at residues 123 to 158 (ETRG…SFIR), 159 to 198 (NSAS…SVIE), 206 to 244 (KVIV…ELYG), 284 to 325 (GLLS…EIIP), 345 to 380 (NVAK…EMFN), 381 to 418 (KVFK…IMWE), 526 to 563 (SMKA…RLII), and 564 to 599 (KLRG…AIAS). Positions 322-675 (EIIPLILRCN…DASEDAAQEI (354 aa)) constitute a PUM-HD domain. Composition is skewed to basic and acidic residues over residues 677–688 (VKNTRKEIDHHP), 699–712 (HAKD…GEKR), and 719–728 (KTSEATDKPK). The disordered stretch occupies residues 677–753 (VKNTRKEIDH…KNRHSNKMRI (77 aa)). The segment covering 744 to 753 (KNRHSNKMRI) has biased composition (basic residues).

It is found in the nucleus. It localises to the nucleolus. Its function is as follows. Sequence-specific RNA-binding protein that regulates translation and mRNA stability by binding the 3'-UTR of target mRNAs. This Arabidopsis thaliana (Mouse-ear cress) protein is Pumilio homolog 23 (APUM23).